The chain runs to 571 residues: Urease subunit alpha (571 aa).

One can recognise a Urease domain in the interval 133-571 (GGIDTHVHFV…LPLTQRYFLF (439 aa)). Residues histidine 138, histidine 140, and lysine 221 each contribute to the Ni(2+) site. Lysine 221 carries the N6-carboxylysine modification. Histidine 223 contacts substrate. Residues histidine 250 and histidine 276 each coordinate Ni(2+). Residue histidine 324 is the Proton donor of the active site. Aspartate 364 is a Ni(2+) binding site.

The protein belongs to the metallo-dependent hydrolases superfamily. Urease alpha subunit family. As to quaternary structure, heterotrimer of UreA (gamma), UreB (beta) and UreC (alpha) subunits. Three heterotrimers associate to form the active enzyme. Requires Ni cation as cofactor. Post-translationally, carboxylation allows a single lysine to coordinate two nickel ions.

The protein resides in the cytoplasm. It catalyses the reaction urea + 2 H2O + H(+) = hydrogencarbonate + 2 NH4(+). It functions in the pathway nitrogen metabolism; urea degradation; CO(2) and NH(3) from urea (urease route): step 1/1. This chain is Urease subunit alpha, found in Staphylococcus xylosus.